A 344-amino-acid chain; its full sequence is Dihydroorotase (344 aa).

2 residues coordinate Zn(2+): H13 and H15. Substrate-binding positions include 15-17 (HLR) and N41. Zn(2+)-binding residues include K98, H135, and H173. N6-carboxylysine is present on K98. H135 serves as a coordination point for substrate. L218 lines the substrate pocket. Residue D247 participates in Zn(2+) binding. Residue D247 is part of the active site. Substrate contacts are provided by H251 and A263.

This sequence belongs to the metallo-dependent hydrolases superfamily. DHOase family. Class II DHOase subfamily. As to quaternary structure, homodimer. Zn(2+) serves as cofactor.

The enzyme catalyses (S)-dihydroorotate + H2O = N-carbamoyl-L-aspartate + H(+). It functions in the pathway pyrimidine metabolism; UMP biosynthesis via de novo pathway; (S)-dihydroorotate from bicarbonate: step 3/3. Its function is as follows. Catalyzes the reversible cyclization of carbamoyl aspartate to dihydroorotate. The sequence is that of Dihydroorotase from Neisseria meningitidis serogroup B (strain ATCC BAA-335 / MC58).